The chain runs to 762 residues: Multifunctional tryptophan biosynthesis protein (762 aa).

A Glutamine amidotransferase type-1 domain is found at asparagine 25 to glutamate 224. Residue glycine 76 to glycine 78 coordinates L-glutamine. Cysteine 104 serves as the catalytic Nucleophile; for GATase activity. L-glutamine-binding positions include glutamine 108 and serine 154–leucine 155. Residues histidine 198 and glutamate 200 each act as for GATase activity in the active site. The tract at residues isoleucine 251 to cysteine 515 is indole-3-glycerol phosphate synthase. Residues leucine 531–arginine 762 form an N-(5'-phosphoribosyl)anthranilate isomerase region.

Tetramer of two components I and two components II.

It catalyses the reaction chorismate + L-glutamine = anthranilate + pyruvate + L-glutamate + H(+). The catalysed reaction is N-(5-phospho-beta-D-ribosyl)anthranilate = 1-(2-carboxyphenylamino)-1-deoxy-D-ribulose 5-phosphate. It carries out the reaction 1-(2-carboxyphenylamino)-1-deoxy-D-ribulose 5-phosphate + H(+) = (1S,2R)-1-C-(indol-3-yl)glycerol 3-phosphate + CO2 + H2O. It participates in amino-acid biosynthesis; L-tryptophan biosynthesis; L-tryptophan from chorismate: step 1/5. The protein operates within amino-acid biosynthesis; L-tryptophan biosynthesis; L-tryptophan from chorismate: step 3/5. Its pathway is amino-acid biosynthesis; L-tryptophan biosynthesis; L-tryptophan from chorismate: step 4/5. Trifunctional enzyme bearing the Gln amidotransferase (GATase) domain of anthranilate synthase, indole-glycerolphosphate synthase, and phosphoribosylanthranilate isomerase activities. The chain is Multifunctional tryptophan biosynthesis protein (trp-1) from Neurospora crassa (strain ATCC 24698 / 74-OR23-1A / CBS 708.71 / DSM 1257 / FGSC 987).